The primary structure comprises 137 residues: Nucleoside diphosphate kinase (137 aa).

Residues Lys10, Phe59, Arg87, Thr93, Arg104, and Asn114 each contribute to the ATP site. The active-site Pros-phosphohistidine intermediate is the His117.

The protein belongs to the NDK family. As to quaternary structure, homotetramer. Requires Mg(2+) as cofactor.

The protein resides in the cytoplasm. The enzyme catalyses a 2'-deoxyribonucleoside 5'-diphosphate + ATP = a 2'-deoxyribonucleoside 5'-triphosphate + ADP. The catalysed reaction is a ribonucleoside 5'-diphosphate + ATP = a ribonucleoside 5'-triphosphate + ADP. Major role in the synthesis of nucleoside triphosphates other than ATP. The ATP gamma phosphate is transferred to the NDP beta phosphate via a ping-pong mechanism, using a phosphorylated active-site intermediate. In Streptomyces coelicolor (strain ATCC BAA-471 / A3(2) / M145), this protein is Nucleoside diphosphate kinase.